A 169-amino-acid chain; its full sequence is Cell division inhibitor SulA (169 aa).

The segment at Ala-106–Tyr-112 is ftsZ binding. Positions Lys-162 to His-169 are lon protease binding.

This sequence belongs to the SulA family. As to quaternary structure, interacts with FtsZ. Is rapidly cleaved and degraded by the Lon protease once DNA damage is repaired.

Its function is as follows. Component of the SOS system and an inhibitor of cell division. Accumulation of SulA causes rapid cessation of cell division and the appearance of long, non-septate filaments. In the presence of GTP, binds a polymerization-competent form of FtsZ in a 1:1 ratio, thus inhibiting FtsZ polymerization and therefore preventing it from participating in the assembly of the Z ring. This mechanism prevents the premature segregation of damaged DNA to daughter cells during cell division. The protein is Cell division inhibitor SulA of Salmonella gallinarum (strain 287/91 / NCTC 13346).